The primary structure comprises 81 residues: ATP synthase subunit c, chloroplastic (81 aa).

2 consecutive transmembrane segments (helical) span residues 3 to 23 and 53 to 73; these read PLIS…ASIG and LLLS…VALA.

This sequence belongs to the ATPase C chain family. As to quaternary structure, F-type ATPases have 2 components, F(1) - the catalytic core - and F(0) - the membrane proton channel. F(1) has five subunits: alpha(3), beta(3), gamma(1), delta(1), epsilon(1). F(0) has four main subunits: a(1), b(1), b'(1) and c(10-14). The alpha and beta chains form an alternating ring which encloses part of the gamma chain. F(1) is attached to F(0) by a central stalk formed by the gamma and epsilon chains, while a peripheral stalk is formed by the delta, b and b' chains.

The protein resides in the plastid. It is found in the chloroplast thylakoid membrane. Functionally, f(1)F(0) ATP synthase produces ATP from ADP in the presence of a proton or sodium gradient. F-type ATPases consist of two structural domains, F(1) containing the extramembraneous catalytic core and F(0) containing the membrane proton channel, linked together by a central stalk and a peripheral stalk. During catalysis, ATP synthesis in the catalytic domain of F(1) is coupled via a rotary mechanism of the central stalk subunits to proton translocation. In terms of biological role, key component of the F(0) channel; it plays a direct role in translocation across the membrane. A homomeric c-ring of between 10-14 subunits forms the central stalk rotor element with the F(1) delta and epsilon subunits. The protein is ATP synthase subunit c, chloroplastic of Huperzia lucidula (Shining clubmoss).